The chain runs to 81 residues: Sulfur carrier protein TusA (81 aa).

Cys-19 functions as the Cysteine persulfide intermediate in the catalytic mechanism.

This sequence belongs to the sulfur carrier protein TusA family. As to quaternary structure, interacts with IscS.

The protein localises to the cytoplasm. It participates in tRNA modification. Sulfur carrier protein involved in sulfur trafficking in the cell. Part of a sulfur-relay system required for 2-thiolation during synthesis of 2-thiouridine of the modified wobble base 5-methylaminomethyl-2-thiouridine (mnm(5)s(2)U) in tRNA. Interacts with IscS and stimulates its cysteine desulfurase activity. Accepts an activated sulfur from IscS, which is then transferred to TusD, and thus determines the direction of sulfur flow from IscS to 2-thiouridine formation. Also appears to be involved in sulfur transfer for the biosynthesis of molybdopterin. This chain is Sulfur carrier protein TusA, found in Erwinia tasmaniensis (strain DSM 17950 / CFBP 7177 / CIP 109463 / NCPPB 4357 / Et1/99).